The chain runs to 555 residues: Wee1-like protein kinase 2 (555 aa).

Residues 1 to 112 form a disordered region; it reads MADTETDQGL…NFSTPKNSLG (112 aa). S15 is modified (phosphoserine; by CaMK2 and PKA). The span at 26–41 shows a compositional bias: polar residues; sequence EGQMTAQDIGGAQSQK. Residues 57-72 show a composition bias toward basic and acidic residues; it reads TRDELHTSLSRDKESP. S71 carries the post-translational modification Phosphoserine. Positions 102 to 112 are enriched in polar residues; sequence TNFSTPKNSLG. A Nuclear localization signal motif is present at residues 167–169; it reads KRK. The region spanning 208 to 485 is the Protein kinase domain; that stretch reads FFEIEKIGVG…ARSRILWPFL (278 aa). Residues 214–222 and K237 each bind ATP; that span reads IGVGEFGTV. Positions 310 to 324 match the Nuclear export signal motif; the sequence is KLKDILLQISLGLKY. The active-site Proton acceptor is D334. The Mg(2+) site is built by N339 and D375. The stretch at 488–514 forms a coiled coil; that stretch reads TDELQKQLNLEKSKTATLKRELKKARH.

Belongs to the protein kinase superfamily. Ser/Thr protein kinase family. WEE1 subfamily. Post-translationally, phosphorylated by PKA at Ser-15 in vitro, leading to activate kinase activity. Phosphorylation at Ser-15 by CaMK2, leading to increase its activity and promote metaphase II exit during egg activation. In terms of tissue distribution, ovary-specific.

It is found in the cytoplasm. It localises to the nucleus. It catalyses the reaction L-tyrosyl-[protein] + ATP = O-phospho-L-tyrosyl-[protein] + ADP + H(+). Oocyte-specific protein tyrosine kinase that phosphorylates and inhibits CDK1 and acts as a key regulator of meiosis during both prophase I and metaphase II. Required to maintain meiotic arrest in oocytes during the germinal vesicle (GV) stage, a long period of quiescence at dictyate prophase I, by phosphorylating CDK1 at 'Tyr-15', leading to inhibit CDK1 activity and prevent meiotic reentry. Also required for metaphase II exit during egg activation by phosphorylating CDK1 at 'Tyr-15', to ensure exit from meiosis in oocytes and promote pronuclear formation. In Mus musculus (Mouse), this protein is Wee1-like protein kinase 2 (Wee2).